Reading from the N-terminus, the 168-residue chain is Fusaric acid resistance protein FusE (168 aa).

Its function is as follows. Involved in the resistance (detoxification) of the fungal toxin fusaric acid. In Burkholderia cepacia (Pseudomonas cepacia), this protein is Fusaric acid resistance protein FusE (fusE).